Reading from the N-terminus, the 766-residue chain is Isocitrate lyase 2 (766 aa).

A substrate-binding site is contributed by G106–W108. D177 serves as a coordination point for Mg(2+). C215 functions as the Proton acceptor in the catalytic mechanism. Residues G216–H217, R252, N487–S491, and T522 each bind substrate.

This sequence belongs to the isocitrate lyase/PEP mutase superfamily. Isocitrate lyase family. The cofactor is Mg(2+).

It catalyses the reaction D-threo-isocitrate = glyoxylate + succinate. It functions in the pathway carbohydrate metabolism; glyoxylate cycle; (S)-malate from isocitrate: step 1/2. Functionally, involved in the persistence and virulence of Mycobacterium. Catalyzes the reversible formation of succinate and glyoxylate from isocitrate, a key step of the glyoxylate cycle, which operates as an anaplerotic route for replenishing the tricarboxylic acid cycle during growth on fatty acid substrates. This is Isocitrate lyase 2 (aceA) from Mycobacterium bovis (strain ATCC BAA-935 / AF2122/97).